The following is a 465-amino-acid chain: Ribulose bisphosphate carboxylase large chain (465 aa).

Residue Lys-4 is modified to N6,N6,N6-trimethyllysine. Residues Asn-113 and Thr-163 each coordinate substrate. The Proton acceptor role is filled by Lys-165. Residue Lys-167 coordinates substrate. 3 residues coordinate Mg(2+): Lys-191, Asp-193, and Glu-194. Position 191 is an N6-carboxylysine (Lys-191). His-284 (proton acceptor) is an active-site residue. Substrate is bound by residues Arg-285, His-317, and Ser-369.

Belongs to the RuBisCO large chain family. Type I subfamily. Heterohexadecamer of 8 large chains and 8 small chains; disulfide-linked. The disulfide link is formed within the large subunit homodimers. Mg(2+) is required as a cofactor. Post-translationally, the disulfide bond which can form in the large chain dimeric partners within the hexadecamer appears to be associated with oxidative stress and protein turnover.

It is found in the plastid. It localises to the chloroplast. It catalyses the reaction 2 (2R)-3-phosphoglycerate + 2 H(+) = D-ribulose 1,5-bisphosphate + CO2 + H2O. The enzyme catalyses D-ribulose 1,5-bisphosphate + O2 = 2-phosphoglycolate + (2R)-3-phosphoglycerate + 2 H(+). Its function is as follows. RuBisCO catalyzes two reactions: the carboxylation of D-ribulose 1,5-bisphosphate, the primary event in carbon dioxide fixation, as well as the oxidative fragmentation of the pentose substrate in the photorespiration process. Both reactions occur simultaneously and in competition at the same active site. The sequence is that of Ribulose bisphosphate carboxylase large chain from Cornus oblonga.